We begin with the raw amino-acid sequence, 460 residues long: Cytochrome P450 CYP71D312 (460 aa).

Residue Cys-398 participates in heme binding.

It belongs to the cytochrome P450 family. The cofactor is heme.

Functionally, probable heme-thiolate monooxygenase. In Panax ginseng (Korean ginseng), this protein is Cytochrome P450 CYP71D312.